A 1405-amino-acid chain; its full sequence is Centlein (1405 aa).

Positions 1–14 are enriched in pro residues; the sequence is MAARSPPSPHPSPP. Positions 1 to 79 are disordered; it reads MAARSPPSPH…GGAAPAHAPL (79 aa). An N-acetylalanine modification is found at Ala2. Phosphoserine occurs at positions 5 and 22. Basic and acidic residues predominate over residues 48-58; the sequence is VVADESDKIWV. Gly residues predominate over residues 61–71; it reads EGSGGRRGPGG. A coiled-coil region spans residues 95–126; the sequence is EEAMVTRTQLLEEELSSLKEELALCQADKEFV. Disordered regions lie at residues 421–450 and 493–529; these read KLKEKLQESQGAPLPLPQESDPDYSAQVPH and SRKSIMTSAEGKHKEPPVKRSRSLSPKSSFTDSEELQ. 2 coiled-coil regions span residues 613–655 and 681–793; these read NELA…ELNR and KNGK…ELIN. The tract at residues 865-917 is disordered; it reads WEDVSESSSDSEAQTSQTLGTIIVETSQKISPTEDGKDQKESDPTEDSQTQGK. Positions 877–895 are enriched in polar residues; the sequence is AQTSQTLGTIIVETSQKIS. Basic and acidic residues predominate over residues 896-907; the sequence is PTEDGKDQKESD. Residues 980 to 1311 are a coiled coil; sequence NIILLRERII…IRELKKMKKN (332 aa). Thr1343 carries the post-translational modification Phosphothreonine.

Interacts with CEP250 and CEP68. Interacts with NEK2; the interaction leads to phosphorylation of CNTLN. In terms of processing, phosphorylated directly or indirectly by NEK2.

It is found in the cytoplasm. The protein localises to the cytoskeleton. It localises to the microtubule organizing center. The protein resides in the centrosome. Its subcellular location is the centriole. Its function is as follows. Required for centrosome cohesion and recruitment of CEP68 to centrosomes. This chain is Centlein (CNTLN), found in Homo sapiens (Human).